Here is a 265-residue protein sequence, read N- to C-terminus: Neutrophil elastase (265 aa).

Residues 1–26 (MALGRLSSRTLAAMLLALFLGGPALA) form the signal peptide. The Peptidase S1 domain maps to 29-247 (IVGGRPARPH…FADWINSIIR (219 aa)). A disulfide bridge connects residues Cys-54 and Cys-70. Active-site charge relay system residues include His-69 and Asp-116. 2 N-linked (GlcNAc...) asparagine glycosylation sites follow: Asn-123 and Asn-172. 3 disulfides stabilise this stretch: Cys-150–Cys-208, Cys-180–Cys-187, and Cys-198–Cys-223. The active-site Charge relay system is Ser-202.

Belongs to the peptidase S1 family. Elastase subfamily. In terms of assembly, interacts with NOTCH2NL.

It catalyses the reaction Hydrolysis of proteins, including elastin. Preferential cleavage: Val-|-Xaa &gt; Ala-|-Xaa.. In terms of biological role, serine protease that modifies the functions of natural killer cells, monocytes and granulocytes. Inhibits C5a-dependent neutrophil enzyme release and chemotaxis. Promotes blood coagulation. Through the activation of the platelet fibrinogen receptor integrin alpha-IIb/beta-3, potentiates platelet aggregation induced by a threshold concentration of cathepsin G (CTSG). Cleaves and thus inactivates tissue factor pathway inhibitor (TFPI). Capable of killing E.coli; probably digests outer membrane protein A (ompA) in E.coli. The sequence is that of Neutrophil elastase (Elane) from Mus musculus (Mouse).